A 675-amino-acid polypeptide reads, in one-letter code: DNA ligase (675 aa).

NAD(+) is bound by residues 32–36 (DAEYD), 81–82 (SL), and glutamate 113. Catalysis depends on lysine 115, which acts as the N6-AMP-lysine intermediate. NAD(+) is bound by residues arginine 136, glutamate 173, lysine 291, and lysine 315. Cysteine 409, cysteine 412, cysteine 427, and cysteine 433 together coordinate Zn(2+). The BRCT domain occupies 595-675 (SEKTYFFNKK…ELNSLIRIKE (81 aa)).

Belongs to the NAD-dependent DNA ligase family. LigA subfamily. Requires Mg(2+) as cofactor. Mn(2+) is required as a cofactor.

The catalysed reaction is NAD(+) + (deoxyribonucleotide)n-3'-hydroxyl + 5'-phospho-(deoxyribonucleotide)m = (deoxyribonucleotide)n+m + AMP + beta-nicotinamide D-nucleotide.. DNA ligase that catalyzes the formation of phosphodiester linkages between 5'-phosphoryl and 3'-hydroxyl groups in double-stranded DNA using NAD as a coenzyme and as the energy source for the reaction. It is essential for DNA replication and repair of damaged DNA. The protein is DNA ligase of Buchnera aphidicola subsp. Acyrthosiphon pisum (strain 5A).